The sequence spans 59 residues: Large ribosomal subunit protein bL32 (59 aa).

A disordered region spans residues 1 to 59 (MAVQQNKKSPSKRGMHRSHDALTAPALFVDSTTGEVHRPHHISPNGMYRGRKVVKAKGE). Over residues 49-59 (RGRKVVKAKGE) the composition is skewed to basic residues.

It belongs to the bacterial ribosomal protein bL32 family.

In Neisseria gonorrhoeae (strain ATCC 700825 / FA 1090), this protein is Large ribosomal subunit protein bL32.